Reading from the N-terminus, the 98-residue chain is MIPTYMNIMLAFTISLLGMLTYRSHLVASLLCLEGMMMSLFIMATLIASNTHFPLINIMPIILLVFAACEAAVGLALLISISNTYGLDYIHNLNLLQC.

Transmembrane regions (helical) follow at residues 1–21, 27–47, and 61–81; these read MIPTYMNIMLAFTISLLGMLT, VASLLCLEGMMMSLFIMATLI, and IILLVFAACEAAVGLALLISI.

This sequence belongs to the complex I subunit 4L family. Core subunit of respiratory chain NADH dehydrogenase (Complex I) which is composed of 45 different subunits.

Its subcellular location is the mitochondrion inner membrane. The catalysed reaction is a ubiquinone + NADH + 5 H(+)(in) = a ubiquinol + NAD(+) + 4 H(+)(out). Its function is as follows. Core subunit of the mitochondrial membrane respiratory chain NADH dehydrogenase (Complex I) which catalyzes electron transfer from NADH through the respiratory chain, using ubiquinone as an electron acceptor. Part of the enzyme membrane arm which is embedded in the lipid bilayer and involved in proton translocation. The sequence is that of NADH-ubiquinone oxidoreductase chain 4L (MT-ND4L) from Macaca hecki (Heck's macaque).